The following is a 292-amino-acid chain: Elongation factor Ts (292 aa).

The segment at 80–83 (TDFV) is involved in Mg(2+) ion dislocation from EF-Tu.

Belongs to the EF-Ts family.

Its subcellular location is the cytoplasm. Associates with the EF-Tu.GDP complex and induces the exchange of GDP to GTP. It remains bound to the aminoacyl-tRNA.EF-Tu.GTP complex up to the GTP hydrolysis stage on the ribosome. The sequence is that of Elongation factor Ts from Pediococcus pentosaceus (strain ATCC 25745 / CCUG 21536 / LMG 10740 / 183-1w).